Reading from the N-terminus, the 209-residue chain is Leukemia-associated protein 7 homolog (209 aa).

The segment at 28–87 is disordered; it reads WGWGDGPSAPGSPRGPDHVPIAQARRPGQLRTRRGLGRGSIGARGSPEAGGLRGAEGGAE.

This is Leukemia-associated protein 7 homolog (Dleu7) from Mus musculus (Mouse).